The following is a 110-amino-acid chain: Parvalbumin alpha (110 aa).

2 consecutive EF-hand domains span residues 39–74 and 78–110; these read KNAK…FAPE and LSEK…VANS. Ca(2+) is bound by residues Asp-52, Asp-54, Ser-56, Phe-58, Glu-60, Glu-63, Asp-91, Asp-93, Asp-95, Lys-97, and Glu-102.

Belongs to the parvalbumin family.

In muscle, parvalbumin is thought to be involved in relaxation after contraction. It binds two calcium ions. This chain is Parvalbumin alpha, found in Callorhinchus milii (Ghost shark).